The primary structure comprises 1075 residues: Error-prone DNA polymerase (1075 aa).

This sequence belongs to the DNA polymerase type-C family. DnaE2 subfamily.

The protein localises to the cytoplasm. It catalyses the reaction DNA(n) + a 2'-deoxyribonucleoside 5'-triphosphate = DNA(n+1) + diphosphate. In terms of biological role, DNA polymerase involved in damage-induced mutagenesis and translesion synthesis (TLS). It is not the major replicative DNA polymerase. The protein is Error-prone DNA polymerase of Ralstonia nicotianae (strain ATCC BAA-1114 / GMI1000) (Ralstonia solanacearum).